The chain runs to 607 residues: DNA mismatch repair protein MutL (607 aa).

It belongs to the DNA mismatch repair MutL/HexB family.

Its function is as follows. This protein is involved in the repair of mismatches in DNA. It is required for dam-dependent methyl-directed DNA mismatch repair. May act as a 'molecular matchmaker', a protein that promotes the formation of a stable complex between two or more DNA-binding proteins in an ATP-dependent manner without itself being part of a final effector complex. The polypeptide is DNA mismatch repair protein MutL (Paramagnetospirillum magneticum (strain ATCC 700264 / AMB-1) (Magnetospirillum magneticum)).